Consider the following 63-residue polypeptide: Protein virE1 (63 aa).

Forms heterodimers with virE2 that prevent virE2 anarchic homopolymerization and binding to DNA.

Its function is as follows. Involved in DNA transformation; controls virE2 polymerization and prevents virE2 binding to DNA. The chain is Protein virE1 (virE1) from Agrobacterium fabrum (strain C58 / ATCC 33970) (Agrobacterium tumefaciens (strain C58)).